We begin with the raw amino-acid sequence, 274 residues long: Protein A11 homolog (274 aa).

Residues 106 to 136 (DDNKRVHLLEQEIAELRKKKTKSKNLLDFTN) adopt a coiled-coil conformation.

It belongs to the poxviridae A11 family. In terms of assembly, homomultimer. Interacts with A32. Phosphorylated by a F10-independent mechanism.

It localises to the host cytoplasm. Functionally, required for viral crescent formation early during virus morphogenesis. The protein is Protein A11 homolog of Fowlpox virus (strain NVSL) (FPV).